A 141-amino-acid chain; its full sequence is Large ribosomal subunit protein bL17 (141 aa).

Belongs to the bacterial ribosomal protein bL17 family. In terms of assembly, part of the 50S ribosomal subunit. Contacts protein L32.

This chain is Large ribosomal subunit protein bL17, found in Rhizobium meliloti (strain 1021) (Ensifer meliloti).